The chain runs to 519 residues: MWPLRFNNRFIAVLPCDPEVSLRSRQVLEAWSGVAPTPVPVPCLLAYSSEVAAILNFDAEELVTPRFVEVFSGNALYPGMQPYAVNYGGHQFGQWVGQLGDGRVITLGELLGADGVYYELQLKGAGPTPYSRGADGRAVLRSSIREFLCSEAMHHLGIPTTRALSLIATGDTVIRDMLYDGHPAPEPSAIVCRVAPSFVRFGTFELPASRGDIDLLRRLVEFTIMRDYPHLHGAGETLYVDWFAEICTRTAELVAHWMRVGFVHGVMNTDNMSILGLTIDYGPYGWIDNNDLDWTPNVTDAQSRRYRFGAQPQVAYWNLGCLARALAPLFSDAASLQAGLERFRATYLAAERRDAAAKLGFAACFDEDLELFDALRTCMHQAEMDMTLTFLGLADWEPNMPDSLSLWAEAFYDPVKRDAQAPMLRDWLQRYAARLSVDPLPVAERHERMRLANPRYVLRNYLTQQAIECAEQGDLIELHALLEVMRRPYDFQLGREAYAMRRPEWARSRIGCSMLSCSS.

Residues G100, G102, R103, K123, D135, G136, R193, and R200 each coordinate ATP. D270 acts as the Proton acceptor in catalysis. The Mg(2+) site is built by N271 and D280. D280 lines the ATP pocket.

This sequence belongs to the SELO family. Requires Mg(2+) as cofactor. It depends on Mn(2+) as a cofactor.

The catalysed reaction is L-seryl-[protein] + ATP = 3-O-(5'-adenylyl)-L-seryl-[protein] + diphosphate. It carries out the reaction L-threonyl-[protein] + ATP = 3-O-(5'-adenylyl)-L-threonyl-[protein] + diphosphate. It catalyses the reaction L-tyrosyl-[protein] + ATP = O-(5'-adenylyl)-L-tyrosyl-[protein] + diphosphate. The enzyme catalyses L-histidyl-[protein] + UTP = N(tele)-(5'-uridylyl)-L-histidyl-[protein] + diphosphate. The catalysed reaction is L-seryl-[protein] + UTP = O-(5'-uridylyl)-L-seryl-[protein] + diphosphate. It carries out the reaction L-tyrosyl-[protein] + UTP = O-(5'-uridylyl)-L-tyrosyl-[protein] + diphosphate. Its function is as follows. Nucleotidyltransferase involved in the post-translational modification of proteins. It can catalyze the addition of adenosine monophosphate (AMP) or uridine monophosphate (UMP) to a protein, resulting in modifications known as AMPylation and UMPylation. This is Protein nucleotidyltransferase YdiU from Xylella fastidiosa (strain 9a5c).